We begin with the raw amino-acid sequence, 336 residues long: MAMMAASHDDDTVDGLATAVRGGDRAALPRAITLVESTRPDHREQAQQLLLRLLPDSGNAHRVGITGVPGVGKSTAIEALGMHLIERGHRVAVLAVDPSSTRTGGSILGDKTRMARLAVHPNAYIRPSPTSGTLGGVTRATRETVVLLEAAGFDVILIETVGVGQSEVAVANMVDTFVLLTLARTGDQLQGIKKGVLELADIVVVNKADGEHHKEARLAARELSAAIRLIYPREALWRPPVLTMSAVEGRGLAELWDTVERHRQVLTGAGEFDARRRDQQVDWTWQLVRDAVLDRVWSNPTVRKVRSELERRVRAGELTPALAAQQILEIANLTDR.

Residues 67–75, Asp209, and 245–247 each bind GTP; these read GVPGVGKST and SAV.

It belongs to the SIMIBI class G3E GTPase family. ArgK/MeaB subfamily. Homodimer.

Its function is as follows. Probable GTPase. May also bind and hydrolyze ATP. May function as chaperone. The protein is Probable GTPase MT1543 of Mycobacterium tuberculosis (strain CDC 1551 / Oshkosh).